The primary structure comprises 140 residues: Large ribosomal subunit protein uL11 (140 aa).

Belongs to the universal ribosomal protein uL11 family. As to quaternary structure, part of the ribosomal stalk of the 50S ribosomal subunit. Interacts with L10 and the large rRNA to form the base of the stalk. L10 forms an elongated spine to which L12 dimers bind in a sequential fashion forming a multimeric L10(L12)X complex. In terms of processing, one or more lysine residues are methylated.

Its function is as follows. Forms part of the ribosomal stalk which helps the ribosome interact with GTP-bound translation factors. The polypeptide is Large ribosomal subunit protein uL11 (Nitratidesulfovibrio vulgaris (strain DSM 19637 / Miyazaki F) (Desulfovibrio vulgaris)).